Consider the following 321-residue polypeptide: Phospho-N-acetylmuramoyl-pentapeptide-transferase (321 aa).

A run of 10 helical transmembrane segments spans residues 6-26 (IFIPIVVSFAITVSVMPLFIG), 54-74 (MGGVVFLVASLITSLAMGLFF), 77-97 (FTPSLLIILFILVLYGLLGYL), 117-137 (LIGQIFGGLVFYFVYRSEGFS), 143-163 (FGVAEVPLGIFYGVFIIFWLV), 175-195 (IDGLVAGLGTISFGTYAIIAW), 200-220 (FDVVIICLSVIGGLIGFFPYN), 226-246 (IFMGDVGSLALGGLLAAISII), 251-271 (WTLLLIGLVYVCETASVILQV), and 301-321 (IDFVFWSVGLICSGITLWILF).

The protein belongs to the glycosyltransferase 4 family. MraY subfamily. It depends on Mg(2+) as a cofactor.

It localises to the cell membrane. The catalysed reaction is UDP-N-acetyl-alpha-D-muramoyl-L-alanyl-gamma-D-glutamyl-L-lysyl-D-alanyl-D-alanine + di-trans,octa-cis-undecaprenyl phosphate = Mur2Ac(oyl-L-Ala-gamma-D-Glu-L-Lys-D-Ala-D-Ala)-di-trans,octa-cis-undecaprenyl diphosphate + UMP. The protein operates within cell wall biogenesis; peptidoglycan biosynthesis. Catalyzes the initial step of the lipid cycle reactions in the biosynthesis of the cell wall peptidoglycan: transfers peptidoglycan precursor phospho-MurNAc-pentapeptide from UDP-MurNAc-pentapeptide onto the lipid carrier undecaprenyl phosphate, yielding undecaprenyl-pyrophosphoryl-MurNAc-pentapeptide, known as lipid I. This Enterococcus faecalis (strain ATCC 700802 / V583) protein is Phospho-N-acetylmuramoyl-pentapeptide-transferase.